A 363-amino-acid polypeptide reads, in one-letter code: 3-dehydroquinate synthase (363 aa).

NAD(+) is bound by residues 71–76, 105–109, 129–130, K142, K151, and 169–172; these read DGEQYK, GVIGD, TT, and CLKT. Zn(2+)-binding residues include E184, H247, and H264.

This sequence belongs to the sugar phosphate cyclases superfamily. Dehydroquinate synthase family. NAD(+) is required as a cofactor. Requires Co(2+) as cofactor. The cofactor is Zn(2+).

The protein resides in the cytoplasm. The catalysed reaction is 7-phospho-2-dehydro-3-deoxy-D-arabino-heptonate = 3-dehydroquinate + phosphate. The protein operates within metabolic intermediate biosynthesis; chorismate biosynthesis; chorismate from D-erythrose 4-phosphate and phosphoenolpyruvate: step 2/7. In terms of biological role, catalyzes the conversion of 3-deoxy-D-arabino-heptulosonate 7-phosphate (DAHP) to dehydroquinate (DHQ). This chain is 3-dehydroquinate synthase, found in Vibrio vulnificus (strain CMCP6).